A 501-amino-acid polypeptide reads, in one-letter code: MMDPAAGSGPDGAAVMPPELPALPVAAEDPMALYRQVLRDFKELFFCLEPMEITRYVHRNEGRCLSLGPPKGWHVMLRTEDGIITAAKQAASKLICCREPLTPLGYAVILLPEPRRDHHDGMVATPYVVFMGRFSRVYAYDTREKYMVLVSHNLDELARYGVSRSEIAYRDVIHTTLRRMTVPVPRRYPKGARTMHVLFLNDTTPEGSYATAERILGCDVKLHTPGYGTVIMRLMKTVQQLHRIWPFCALTEVESRRWWWAVRANLATPWYVLGVTGRPRPGRSFVAEVLVLLDWFGAVYAIQMDDPNHYVRRVANTITEFFRMGLLKMVFRHRRFERERQRQTRMEHRHLCPHHHERAVDHKRDILFNEDAALPDERRERERRILQQQYDWLCLTERFDPHEGAWERLDPNTLVLHRYDTNSQSYVLDPDIVGVEAAEREAAGHQDDTGPRLHCLVTTRSSTREGAERVITALVHQSRLVTYSDPFPLKSLTGVREYIQI.

This sequence belongs to the herpesviridae US22 family.

Its subcellular location is the virion tegument. The polypeptide is Tegument protein US24 (US24) (Human cytomegalovirus (strain AD169) (HHV-5)).